Consider the following 102-residue polypeptide: NADH-quinone oxidoreductase subunit K (102 aa).

3 helical membrane-spanning segments follow: residues 5-25, 31-51, and 66-86; these read IAHYLTVSAVLFTLGVFGIFL, IVILMSVELILLAVNINFVAF, and FVLTVAAAEAAIGLAILVVFF.

This sequence belongs to the complex I subunit 4L family. NDH-1 is composed of 14 different subunits. Subunits NuoA, H, J, K, L, M, N constitute the membrane sector of the complex.

The protein resides in the cell inner membrane. The catalysed reaction is a quinone + NADH + 5 H(+)(in) = a quinol + NAD(+) + 4 H(+)(out). In terms of biological role, NDH-1 shuttles electrons from NADH, via FMN and iron-sulfur (Fe-S) centers, to quinones in the respiratory chain. The immediate electron acceptor for the enzyme in this species is believed to be ubiquinone. Couples the redox reaction to proton translocation (for every two electrons transferred, four hydrogen ions are translocated across the cytoplasmic membrane), and thus conserves the redox energy in a proton gradient. This chain is NADH-quinone oxidoreductase subunit K, found in Mesorhizobium japonicum (strain LMG 29417 / CECT 9101 / MAFF 303099) (Mesorhizobium loti (strain MAFF 303099)).